Consider the following 366-residue polypeptide: NADH-quinone oxidoreductase subunit D (366 aa).

It belongs to the complex I 49 kDa subunit family. As to quaternary structure, NDH-1 is composed of 14 different subunits. Subunits NuoB, C, D, E, F, and G constitute the peripheral sector of the complex.

The protein resides in the cell membrane. The enzyme catalyses a quinone + NADH + 5 H(+)(in) = a quinol + NAD(+) + 4 H(+)(out). NDH-1 shuttles electrons from NADH, via FMN and iron-sulfur (Fe-S) centers, to quinones in the respiratory chain. The immediate electron acceptor for the enzyme in this species is believed to be a menaquinone. Couples the redox reaction to proton translocation (for every two electrons transferred, four hydrogen ions are translocated across the cytoplasmic membrane), and thus conserves the redox energy in a proton gradient. This is NADH-quinone oxidoreductase subunit D from Bacillus thuringiensis (strain Al Hakam).